Consider the following 256-residue polypeptide: MNDLLTIGDKTFRSRLFTGTGKFPNASVMQKALIESGSELSTMALKRVEVNNPEDNILKPIVDAGINLLPNTSGAKNAREAIFAAQLAREALGTNWLKLEIHPDPKYLMPDPIETLTAAEELVKQGFIVLPYCHADPVLCKRLEEVGCAAVMPLGAPIGSNKGIVSRDFLEIIIDQARVPVVVDAGIGAPSHAALAMELGADAVLVNTAIAAARNPIAMATAFKLAVQSGRLAYENGLASVNTQAVASSPLTAFLD.

Lys-98 (schiff-base intermediate with DXP) is an active-site residue. 1-deoxy-D-xylulose 5-phosphate-binding positions include Gly-159, Ala-185 to Gly-186, and Asn-207 to Thr-208.

This sequence belongs to the ThiG family. As to quaternary structure, homotetramer. Forms heterodimers with either ThiH or ThiS.

Its subcellular location is the cytoplasm. It catalyses the reaction [ThiS sulfur-carrier protein]-C-terminal-Gly-aminoethanethioate + 2-iminoacetate + 1-deoxy-D-xylulose 5-phosphate = [ThiS sulfur-carrier protein]-C-terminal Gly-Gly + 2-[(2R,5Z)-2-carboxy-4-methylthiazol-5(2H)-ylidene]ethyl phosphate + 2 H2O + H(+). The protein operates within cofactor biosynthesis; thiamine diphosphate biosynthesis. Catalyzes the rearrangement of 1-deoxy-D-xylulose 5-phosphate (DXP) to produce the thiazole phosphate moiety of thiamine. Sulfur is provided by the thiocarboxylate moiety of the carrier protein ThiS. In vitro, sulfur can be provided by H(2)S. The sequence is that of Thiazole synthase from Aliivibrio fischeri (strain ATCC 700601 / ES114) (Vibrio fischeri).